A 303-amino-acid chain; its full sequence is tRNA dimethylallyltransferase (303 aa).

Position 12-19 (12-19 (GPTGVGKT)) interacts with ATP. 14-19 (TGVGKT) contributes to the substrate binding site. The interval 37–40 (DSAQ) is interaction with substrate tRNA.

This sequence belongs to the IPP transferase family. As to quaternary structure, monomer. Mg(2+) serves as cofactor.

It carries out the reaction adenosine(37) in tRNA + dimethylallyl diphosphate = N(6)-dimethylallyladenosine(37) in tRNA + diphosphate. Its function is as follows. Catalyzes the transfer of a dimethylallyl group onto the adenine at position 37 in tRNAs that read codons beginning with uridine, leading to the formation of N6-(dimethylallyl)adenosine (i(6)A). In Fusobacterium nucleatum subsp. nucleatum (strain ATCC 25586 / DSM 15643 / BCRC 10681 / CIP 101130 / JCM 8532 / KCTC 2640 / LMG 13131 / VPI 4355), this protein is tRNA dimethylallyltransferase.